We begin with the raw amino-acid sequence, 43 residues long: Defensin (43 aa).

3 disulfides stabilise this stretch: Cys-3–Cys-34, Cys-20–Cys-39, and Cys-24–Cys-41.

It belongs to the invertebrate defensin family. Type 1 subfamily.

It is found in the secreted. Functionally, antibacterial peptide. Affects Gram-positive bacteria M.luteus, B.megaterium, A.viridans, S.aureus and S.saprophyticus. Moderate activity against P.acidilactici and B.subtilis QB935. Also affects Gram-negative bacterium, D22 form of E.coli. The sequence is that of Defensin from Pyrrhocoris apterus (Sap sucking bug).